A 317-amino-acid polypeptide reads, in one-letter code: Olfactory receptor 2F2 (317 aa).

Residues methionine 1–isoleucine 25 lie on the Extracellular side of the membrane. A glycan (N-linked (GlcNAc...) asparagine) is linked at asparagine 5. Residues serine 26–isoleucine 49 traverse the membrane as a helical segment. Residues arginine 50 to threonine 57 lie on the Cytoplasmic side of the membrane. The chain crosses the membrane as a helical span at residues proline 58 to proline 79. The Extracellular portion of the chain corresponds to glutamine 80–glutamine 100. An intrachain disulfide couples cysteine 97 to cysteine 189. The chain crosses the membrane as a helical span at residues leucine 101 to tyrosine 120. Topologically, residues aspartate 121 to glycine 139 are cytoplasmic. The chain crosses the membrane as a helical span at residues leucine 140–valine 158. Residues glutamine 159 to asparagine 195 lie on the Extracellular side of the membrane. A helical membrane pass occupies residues glutamate 196–isoleucine 219. The Cytoplasmic segment spans residues arginine 220–lysine 236. The chain crosses the membrane as a helical span at residues alanine 237 to tyrosine 259. Residues isoleucine 260 to lysine 272 are Extracellular-facing. The chain crosses the membrane as a helical span at residues leucine 273–leucine 292. Residues arginine 293–threonine 317 lie on the Cytoplasmic side of the membrane.

The protein belongs to the G-protein coupled receptor 1 family.

The protein resides in the cell membrane. Odorant receptor. In Homo sapiens (Human), this protein is Olfactory receptor 2F2 (OR2F2).